A 396-amino-acid chain; its full sequence is Purple acid phosphatase 5 (396 aa).

A signal peptide spans 1-13; sequence MSLETFPPPAGYN. Residue N58 is glycosylated (N-linked (GlcNAc...) asparagine). D125 serves as a coordination point for Fe cation. N-linked (GlcNAc...) asparagine glycosylation is present at N133. D153 and Y156 together coordinate Fe cation. Residue D153 participates in Zn(2+) binding. Residue N190 participates in Zn(2+) binding. Residue N190 coordinates substrate. N238 carries an N-linked (GlcNAc...) asparagine glycan. A Zn(2+)-binding site is contributed by H250. The active-site Proton donor is H260. H287 serves as a coordination point for Zn(2+). 287 to 289 provides a ligand contact to substrate; sequence HVH. H289 contributes to the Fe cation binding site. 2 N-linked (GlcNAc...) asparagine glycosylation sites follow: N303 and N360.

The protein belongs to the metallophosphoesterase superfamily. Purple acid phosphatase family. As to quaternary structure, homodimer. Fe cation serves as cofactor. The cofactor is Zn(2+).

Its subcellular location is the secreted. It carries out the reaction a phosphate monoester + H2O = an alcohol + phosphate. The sequence is that of Purple acid phosphatase 5 (PAP5) from Arabidopsis thaliana (Mouse-ear cress).